The chain runs to 450 residues: tRNA modification GTPase MnmE (450 aa).

K21, E78, and K117 together coordinate (6S)-5-formyl-5,6,7,8-tetrahydrofolate. Residues 213–376 (GHALSIIGKP…LSQKISAFFP (164 aa)) form the TrmE-type G domain. A K(+)-binding site is contributed by N223. GTP contacts are provided by residues 223 to 228 (NAGKSS), 242 to 248 (SDIKGTT), and 267 to 270 (DTAG). S227 is a Mg(2+) binding site. K(+) contacts are provided by S242, I244, and T247. A Mg(2+)-binding site is contributed by T248. K450 contributes to the (6S)-5-formyl-5,6,7,8-tetrahydrofolate binding site.

This sequence belongs to the TRAFAC class TrmE-Era-EngA-EngB-Septin-like GTPase superfamily. TrmE GTPase family. Homodimer. Heterotetramer of two MnmE and two MnmG subunits. It depends on K(+) as a cofactor.

It localises to the cytoplasm. Its function is as follows. Exhibits a very high intrinsic GTPase hydrolysis rate. Involved in the addition of a carboxymethylaminomethyl (cmnm) group at the wobble position (U34) of certain tRNAs, forming tRNA-cmnm(5)s(2)U34. In Helicobacter acinonychis (strain Sheeba), this protein is tRNA modification GTPase MnmE.